The sequence spans 158 residues: 6,7-dimethyl-8-ribityllumazine synthase (158 aa).

Residues Trp-27, 58–60, and 81–83 contribute to the 5-amino-6-(D-ribitylamino)uracil site; these read SFE and VII. 86-87 contacts (2S)-2-hydroxy-3-oxobutyl phosphate; that stretch reads GT. His-89 functions as the Proton donor in the catalytic mechanism. Phe-114 is a 5-amino-6-(D-ribitylamino)uracil binding site. Arg-128 serves as a coordination point for (2S)-2-hydroxy-3-oxobutyl phosphate.

Belongs to the DMRL synthase family.

The catalysed reaction is (2S)-2-hydroxy-3-oxobutyl phosphate + 5-amino-6-(D-ribitylamino)uracil = 6,7-dimethyl-8-(1-D-ribityl)lumazine + phosphate + 2 H2O + H(+). The protein operates within cofactor biosynthesis; riboflavin biosynthesis; riboflavin from 2-hydroxy-3-oxobutyl phosphate and 5-amino-6-(D-ribitylamino)uracil: step 1/2. In terms of biological role, catalyzes the formation of 6,7-dimethyl-8-ribityllumazine by condensation of 5-amino-6-(D-ribitylamino)uracil with 3,4-dihydroxy-2-butanone 4-phosphate. This is the penultimate step in the biosynthesis of riboflavin. The sequence is that of 6,7-dimethyl-8-ribityllumazine synthase from Leifsonia xyli subsp. xyli (strain CTCB07).